The following is a 465-amino-acid chain: Zinc finger CCCH domain-containing protein 58 (465 aa).

The interval methionine 1–glutamate 26 is disordered. C3H1-type zinc fingers lie at residues arginine 51–asparagine 79, arginine 97–glutamine 125, and arginine 145–proline 173. Disordered stretches follow at residues proline 173 to glutamine 200 and leucine 274 to glutamate 302. The span at glutamine 177–proline 191 shows a compositional bias: low complexity. Positions serine 283–proline 298 are enriched in polar residues. 2 C3H1-type zinc fingers span residues arginine 300–glutamate 328 and arginine 345–glycine 373. Over residues serine 397–threonine 431 the composition is skewed to low complexity. Residues serine 397–serine 465 are disordered. A compositionally biased stretch (basic and acidic residues) spans serine 444–lysine 453. Over residues glycine 454–serine 465 the composition is skewed to polar residues.

The protein resides in the nucleus. This chain is Zinc finger CCCH domain-containing protein 58, found in Arabidopsis thaliana (Mouse-ear cress).